Consider the following 391-residue polypeptide: Immunoglobulin heavy constant alpha 2 (391 aa).

Residues 1–357 (ASPTSPKVFP…TPGANLWPTT (357 aa)) lie on the Extracellular side of the membrane. 3 Ig-like domains span residues 6 to 98 (PKVF…QDVT), 112 to 207 (PRLS…ANIT), and 215 to 317 (PEVH…KTID). A disulfide bridge links cysteine 26 with cysteine 85. N-linked (GlcNAc...) asparagine glycosylation occurs at asparagine 47. Asparagine 92 is a glycosylation site (N-linked (GlcNAc...) (complex) asparagine). Intrachain disulfides connect cysteine 110-cysteine 167 and cysteine 134-cysteine 191. Asparagine 131 carries N-linked (GlcNAc...) asparagine glycosylation. A glycan (N-linked (GlcNAc...) (complex) asparagine) is linked at asparagine 205. The cysteines at positions 237 and 300 are disulfide-linked. Aspartate 327 is a glycosylation site (N-linked (GlcNAc...) (complex) asparagine). Residues 358–379 (ITFLTLFLLSLFYSTALTVTSV) form a helical membrane-spanning segment. The Cytoplasmic portion of the chain corresponds to 380–391 (RGPSGKREGPQY).

In terms of assembly, immunoglobulins are composed of two identical heavy chains and two identical light chains; disulfide-linked. Monomeric or polymeric. Part of the secretory IgA (sIgA) complex that consists of two, four or five IgA monomers, and two additional non-Ig polypeptides, namely the JCHAIN and the secretory component (the proteolytic product of PIGR).

It localises to the secreted. The protein resides in the cell membrane. In terms of biological role, constant region of immunoglobulin heavy chains. Immunoglobulins, also known as antibodies, are membrane-bound or secreted glycoproteins produced by B lymphocytes. In the recognition phase of humoral immunity, the membrane-bound immunoglobulins serve as receptors which, upon binding of a specific antigen, trigger the clonal expansion and differentiation of B lymphocytes into immunoglobulins-secreting plasma cells. Secreted immunoglobulins mediate the effector phase of humoral immunity, which results in the elimination of bound antigens. The antigen binding site is formed by the variable domain of one heavy chain, together with that of its associated light chain. Thus, each immunoglobulin has two antigen binding sites with remarkable affinity for a particular antigen. The variable domains are assembled by a process called V-(D)-J rearrangement and can then be subjected to somatic hypermutations which, after exposure to antigen and selection, allow affinity maturation for a particular antigen. Ig alpha is the major immunoglobulin class in body secretions. This Homo sapiens (Human) protein is Immunoglobulin heavy constant alpha 2.